The following is a 387-amino-acid chain: Galactokinase (387 aa).

32 to 35 (EHTD) serves as a coordination point for substrate. Residues S66 and 123-129 (GAGLSSS) each bind ATP. S129 and E161 together coordinate Mg(2+). The active-site Proton acceptor is D173. Y223 contacts substrate.

Belongs to the GHMP kinase family. GalK subfamily.

Its subcellular location is the cytoplasm. The catalysed reaction is alpha-D-galactose + ATP = alpha-D-galactose 1-phosphate + ADP + H(+). Its pathway is carbohydrate metabolism; galactose metabolism. Functionally, catalyzes the transfer of the gamma-phosphate of ATP to D-galactose to form alpha-D-galactose-1-phosphate (Gal-1-P). The chain is Galactokinase from Enterococcus faecalis (strain ATCC 700802 / V583).